Consider the following 962-residue polypeptide: Glycine dehydrogenase (decarboxylating) (962 aa).

At Lys-709 the chain carries N6-(pyridoxal phosphate)lysine.

The protein belongs to the GcvP family. The glycine cleavage system is composed of four proteins: P, T, L and H. The cofactor is pyridoxal 5'-phosphate.

The catalysed reaction is N(6)-[(R)-lipoyl]-L-lysyl-[glycine-cleavage complex H protein] + glycine + H(+) = N(6)-[(R)-S(8)-aminomethyldihydrolipoyl]-L-lysyl-[glycine-cleavage complex H protein] + CO2. In terms of biological role, the glycine cleavage system catalyzes the degradation of glycine. The P protein binds the alpha-amino group of glycine through its pyridoxal phosphate cofactor; CO(2) is released and the remaining methylamine moiety is then transferred to the lipoamide cofactor of the H protein. This is Glycine dehydrogenase (decarboxylating) from Shewanella putrefaciens (strain CN-32 / ATCC BAA-453).